The chain runs to 306 residues: Bifunctional protein FolD (306 aa).

NADP(+)-binding positions include 169-171 (GRS), Ser-194, and Ile-235.

It belongs to the tetrahydrofolate dehydrogenase/cyclohydrolase family. Homodimer.

It carries out the reaction (6R)-5,10-methylene-5,6,7,8-tetrahydrofolate + NADP(+) = (6R)-5,10-methenyltetrahydrofolate + NADPH. The catalysed reaction is (6R)-5,10-methenyltetrahydrofolate + H2O = (6R)-10-formyltetrahydrofolate + H(+). It participates in one-carbon metabolism; tetrahydrofolate interconversion. In terms of biological role, catalyzes the oxidation of 5,10-methylenetetrahydrofolate to 5,10-methenyltetrahydrofolate and then the hydrolysis of 5,10-methenyltetrahydrofolate to 10-formyltetrahydrofolate. In Thermosynechococcus vestitus (strain NIES-2133 / IAM M-273 / BP-1), this protein is Bifunctional protein FolD.